The chain runs to 520 residues: Amine oxidase [flavin-containing] B (520 aa).

N-acetylserine is present on Ser-2. Over 2–489 the chain is Cytoplasmic; that stretch reads SSKCDVVVVG…TFLERHLPSV (488 aa). An N6-acetyllysine modification is found at Lys-52. Cys-397 is subject to S-8alpha-FAD cysteine. Residues 490-516 form a helical; Anchor for type IV membrane protein membrane-spanning segment; it reads PGLLRLIGLTAIFSATALGYLAHKRGL. Over 517 to 520 the chain is Mitochondrial intermembrane; sequence LVRV.

It belongs to the flavin monoamine oxidase family. In terms of assembly, monomer, homo- or heterodimer (containing two subunits of similar size). Each subunit contains a covalently bound flavin. Enzymatically active as monomer. The cofactor is FAD.

It localises to the mitochondrion outer membrane. The enzyme catalyses a secondary aliphatic amine + O2 + H2O = a primary amine + an aldehyde + H2O2. It catalyses the reaction (R)-adrenaline + O2 + H2O = (R)-3,4-dihydroxymandelaldehyde + methylamine + H2O2. It carries out the reaction a primary methyl amine + O2 + H2O = an aldehyde + H2O2 + NH4(+). The catalysed reaction is benzylamine + O2 + H2O = benzaldehyde + H2O2 + NH4(+). The enzyme catalyses dopamine + O2 + H2O = 3,4-dihydroxyphenylacetaldehyde + H2O2 + NH4(+). It catalyses the reaction tyramine + O2 + H2O = (4-hydroxyphenyl)acetaldehyde + H2O2 + NH4(+). It carries out the reaction (R)-noradrenaline + O2 + H2O = (R)-3,4-dihydroxymandelaldehyde + H2O2 + NH4(+). The catalysed reaction is 2-phenylethylamine + O2 + H2O = 2-phenylacetaldehyde + H2O2 + NH4(+). The enzyme catalyses N-acetylputrescine + O2 + H2O = 4-acetamidobutanal + H2O2 + NH4(+). Catalyzes the oxidative deamination of primary and some secondary amines such as neurotransmitters, and exogenous amines including the tertiary amine, neurotoxin 1-methyl-4-phenyl-1,2,3,6-tetrahydropyridine (MPTP), with concomitant reduction of oxygen to hydrogen peroxide and participates in the metabolism of neuroactive and vasoactive amines in the central nervous system and peripheral tissues. Preferentially degrades benzylamine and phenylethylamine. The protein is Amine oxidase [flavin-containing] B of Sus scrofa (Pig).